The chain runs to 260 residues: 3'-5' ssDNA/RNA exonuclease TatD (260 aa).

Residues Glu-92, His-128, and His-153 each contribute to the a divalent metal cation site.

It belongs to the metallo-dependent hydrolases superfamily. TatD-type hydrolase family. TatD subfamily. In terms of assembly, monomer. The cofactor is Mg(2+).

Its subcellular location is the cytoplasm. 3'-5' exonuclease that prefers single-stranded DNA and RNA. May play a role in the H(2)O(2)-induced DNA damage repair. This Pectobacterium atrosepticum (strain SCRI 1043 / ATCC BAA-672) (Erwinia carotovora subsp. atroseptica) protein is 3'-5' ssDNA/RNA exonuclease TatD.